Reading from the N-terminus, the 80-residue chain is Conotoxin SIVB (80 aa).

An N-terminal signal peptide occupies residues 1-21 (MGMRMMFTVFLSVVLATTVVS). Residues 22–38 (TPSDRASDGRNAAVHER) constitute a propeptide that is removed on maturation. At glutamine 39 the chain carries Pyrrolidone carboxylic acid. A glycan (O-linked (HexNAc...) serine) is linked at serine 45. A 4-hydroxyproline mark is found at proline 55, proline 60, proline 61, proline 69, proline 72, and proline 75. Proline 75 is modified (proline amide). The propeptide occupies 76–80 (GRRND).

Belongs to the conotoxin A superfamily. In terms of processing, contains 3 disulfide bonds. Post-translationally, O-linked glycan consists of Hex3-HexNAc2 pentasaccharide. As to expression, expressed by the venom duct.

It is found in the secreted. Functionally, neurotoxin with probable activity on sodium channel. Induces intense repetitive firing of the frog neuromuscular junction, leading to a tetanic contracture in muscle fiber (spastic paralysis). In vivo, shows the same effect as the whole venom when injected on fish prey. This Conus striatus (Striated cone) protein is Conotoxin SIVB.